The primary structure comprises 122 residues: Large ribosomal subunit protein uL14 (122 aa).

It belongs to the universal ribosomal protein uL14 family. As to quaternary structure, part of the 50S ribosomal subunit. Forms a cluster with proteins L3 and L19. In the 70S ribosome, L14 and L19 interact and together make contacts with the 16S rRNA in bridges B5 and B8.

Binds to 23S rRNA. Forms part of two intersubunit bridges in the 70S ribosome. The protein is Large ribosomal subunit protein uL14 of Clavibacter michiganensis subsp. michiganensis (strain NCPPB 382).